The sequence spans 129 residues: Transcription antitermination protein NusB (129 aa).

The protein belongs to the NusB family.

Its function is as follows. Involved in transcription antitermination. Required for transcription of ribosomal RNA (rRNA) genes. Binds specifically to the boxA antiterminator sequence of the ribosomal RNA (rrn) operons. The protein is Transcription antitermination protein NusB of Staphylococcus aureus (strain bovine RF122 / ET3-1).